Reading from the N-terminus, the 545-residue chain is Glucose-6-phosphate isomerase (545 aa).

The active-site Proton donor is Glu351. Catalysis depends on residues His382 and Lys510.

It belongs to the GPI family.

The protein resides in the cytoplasm. The catalysed reaction is alpha-D-glucose 6-phosphate = beta-D-fructose 6-phosphate. It participates in carbohydrate biosynthesis; gluconeogenesis. Its pathway is carbohydrate degradation; glycolysis; D-glyceraldehyde 3-phosphate and glycerone phosphate from D-glucose: step 2/4. Functionally, catalyzes the reversible isomerization of glucose-6-phosphate to fructose-6-phosphate. The polypeptide is Glucose-6-phosphate isomerase (Shewanella sediminis (strain HAW-EB3)).